We begin with the raw amino-acid sequence, 194 residues long: uncharacterized protein (194 aa).

A disordered region spans residues 62 to 93 (GGAGRRTSKAQRVHPQPSHQRQPPPPQHPGPY).

Expressed most abundantly in the brain at protein level. Present in cortex, cerebellum and midbrain. Found in neurons. Elevated expressions detected in Alzheimer brain samples. Also expressed in testis.

It is found in the cytoplasm. This is an uncharacterized protein from Homo sapiens (Human).